Reading from the N-terminus, the 305-residue chain is GMP synthase [glutamine-hydrolyzing] subunit B (305 aa).

The GMPS ATP-PPase domain occupies Val2–Arg184. Ser29–Ser35 is a binding site for ATP.

In terms of assembly, heterodimer composed of a glutamine amidotransferase subunit (A) and a GMP-binding subunit (B).

It carries out the reaction XMP + L-glutamine + ATP + H2O = GMP + L-glutamate + AMP + diphosphate + 2 H(+). It functions in the pathway purine metabolism; GMP biosynthesis; GMP from XMP (L-Gln route): step 1/1. Catalyzes the synthesis of GMP from XMP. In Methanosphaerula palustris (strain ATCC BAA-1556 / DSM 19958 / E1-9c), this protein is GMP synthase [glutamine-hydrolyzing] subunit B.